We begin with the raw amino-acid sequence, 215 residues long: Deoxyribose-phosphate aldolase (215 aa).

The active-site Proton donor/acceptor is aspartate 90. Lysine 152 functions as the Schiff-base intermediate with acetaldehyde in the catalytic mechanism. The active-site Proton donor/acceptor is lysine 181.

The protein belongs to the DeoC/FbaB aldolase family. DeoC type 1 subfamily.

It is found in the cytoplasm. The catalysed reaction is 2-deoxy-D-ribose 5-phosphate = D-glyceraldehyde 3-phosphate + acetaldehyde. It functions in the pathway carbohydrate degradation; 2-deoxy-D-ribose 1-phosphate degradation; D-glyceraldehyde 3-phosphate and acetaldehyde from 2-deoxy-alpha-D-ribose 1-phosphate: step 2/2. Its function is as follows. Catalyzes a reversible aldol reaction between acetaldehyde and D-glyceraldehyde 3-phosphate to generate 2-deoxy-D-ribose 5-phosphate. This is Deoxyribose-phosphate aldolase from Ureaplasma parvum serovar 3 (strain ATCC 27815 / 27 / NCTC 11736).